We begin with the raw amino-acid sequence, 346 residues long: Biotin synthase (346 aa).

In terms of domain architecture, Radical SAM core spans Tyr36 to Arg265. [4Fe-4S] cluster-binding residues include Cys54, Cys58, and Cys61. Residues Cys98, Cys130, Cys190, and Arg260 each coordinate [2Fe-2S] cluster.

The protein belongs to the radical SAM superfamily. Biotin synthase family. In terms of assembly, homodimer. [4Fe-4S] cluster is required as a cofactor. It depends on [2Fe-2S] cluster as a cofactor.

It carries out the reaction (4R,5S)-dethiobiotin + (sulfur carrier)-SH + 2 reduced [2Fe-2S]-[ferredoxin] + 2 S-adenosyl-L-methionine = (sulfur carrier)-H + biotin + 2 5'-deoxyadenosine + 2 L-methionine + 2 oxidized [2Fe-2S]-[ferredoxin]. It functions in the pathway cofactor biosynthesis; biotin biosynthesis; biotin from 7,8-diaminononanoate: step 2/2. Catalyzes the conversion of dethiobiotin (DTB) to biotin by the insertion of a sulfur atom into dethiobiotin via a radical-based mechanism. The protein is Biotin synthase of Acaryochloris marina (strain MBIC 11017).